We begin with the raw amino-acid sequence, 243 residues long: Segregation and condensation protein A (243 aa).

The protein belongs to the ScpA family. In terms of assembly, component of a cohesin-like complex composed of ScpA, ScpB and the Smc homodimer, in which ScpA and ScpB bind to the head domain of Smc. The presence of the three proteins is required for the association of the complex with DNA.

The protein resides in the cytoplasm. Participates in chromosomal partition during cell division. May act via the formation of a condensin-like complex containing Smc and ScpB that pull DNA away from mid-cell into both cell halves. The chain is Segregation and condensation protein A from Staphylococcus aureus (strain NCTC 8325 / PS 47).